The chain runs to 439 residues: Secreted RxLR effector protein 117 (439 aa).

The signal sequence occupies residues 1-21 (MRGAYYVLAALLVVASSQIAA). A RxLR-dEER motif is present at residues 48–65 (RYLRGGHDVHDDSANEER).

It belongs to the RxLR effector family.

The protein resides in the secreted. It localises to the host nucleus. Functionally, secreted effector that acts as an elicitor that induces cell death in host plant cells. The protein is Secreted RxLR effector protein 117 of Plasmopara viticola (Downy mildew of grapevine).